The following is a 420-amino-acid chain: Maturation protein A2 (420 aa).

RNA-binding stretches follow at residues 158 to 176 (IKYL…RAVK), 226 to 236 (QNRHDKIQRLL), and 294 to 298 (PVSDW).

This sequence belongs to the Leviviricetes maturation protein family. Interacts with host MurA; this interaction inhibits the first step in host cell wall synthesis. Interacts with the capsid protein.

Its subcellular location is the virion. Functionally, induces host cell lysis. Inhibits host MurA activity thereby blocking the synthesis of murein precursors necessary for the host cell wall biosynthesis. May be responsible for the attachment to the host pilus. Makes extensive contacts with the viral genome. In Escherichia virus Qbeta (Bacteriophage Q-beta), this protein is Maturation protein A2.